The following is a 202-amino-acid chain: NADH dehydrogenase [ubiquinone] iron-sulfur protein 7, mitochondrial (202 aa).

The N-terminal 56 residues, 1 to 56, are a transit peptide targeting the mitochondrion; sequence MLRRTSFNFTGRAMISRGSPEWSHRLDLKKGKKTTMMHKLGTSKPNNALQYAQMTL. [4Fe-4S] cluster contacts are provided by Cys77, Cys78, Cys142, and Cys172.

Belongs to the complex I 20 kDa subunit family. As to quaternary structure, complex I is composed of 45 different subunits This is a component of the iron-sulfur (IP) fragment of the enzyme. [4Fe-4S] cluster is required as a cofactor.

It localises to the mitochondrion. It catalyses the reaction a ubiquinone + NADH + 5 H(+)(in) = a ubiquinol + NAD(+) + 4 H(+)(out). In terms of biological role, core subunit of the mitochondrial membrane respiratory chain NADH dehydrogenase (Complex I) that is believed to belong to the minimal assembly required for catalysis. Complex I functions in the transfer of electrons from NADH to the respiratory chain. The immediate electron acceptor for the enzyme is believed to be ubiquinone. In Trypanosoma brucei brucei, this protein is NADH dehydrogenase [ubiquinone] iron-sulfur protein 7, mitochondrial (NDHK).